A 255-amino-acid chain; its full sequence is Imidazole glycerol phosphate synthase subunit HisF (255 aa).

Catalysis depends on residues Asp-12 and Asp-131.

It belongs to the HisA/HisF family. Heterodimer of HisH and HisF.

It localises to the cytoplasm. It catalyses the reaction 5-[(5-phospho-1-deoxy-D-ribulos-1-ylimino)methylamino]-1-(5-phospho-beta-D-ribosyl)imidazole-4-carboxamide + L-glutamine = D-erythro-1-(imidazol-4-yl)glycerol 3-phosphate + 5-amino-1-(5-phospho-beta-D-ribosyl)imidazole-4-carboxamide + L-glutamate + H(+). It functions in the pathway amino-acid biosynthesis; L-histidine biosynthesis; L-histidine from 5-phospho-alpha-D-ribose 1-diphosphate: step 5/9. IGPS catalyzes the conversion of PRFAR and glutamine to IGP, AICAR and glutamate. The HisF subunit catalyzes the cyclization activity that produces IGP and AICAR from PRFAR using the ammonia provided by the HisH subunit. This is Imidazole glycerol phosphate synthase subunit HisF from Zymomonas mobilis subsp. mobilis (strain ATCC 31821 / ZM4 / CP4).